Consider the following 85-residue polypeptide: Putative membrane protein insertion efficiency factor (85 aa).

The protein belongs to the UPF0161 family.

It is found in the cell inner membrane. Could be involved in insertion of integral membrane proteins into the membrane. The sequence is that of Putative membrane protein insertion efficiency factor from Escherichia coli O6:H1 (strain CFT073 / ATCC 700928 / UPEC).